The primary structure comprises 204 residues: ATP phosphoribosyltransferase (204 aa).

It belongs to the ATP phosphoribosyltransferase family. Short subfamily. In terms of assembly, heteromultimer composed of HisG and HisZ subunits.

The protein localises to the cytoplasm. The enzyme catalyses 1-(5-phospho-beta-D-ribosyl)-ATP + diphosphate = 5-phospho-alpha-D-ribose 1-diphosphate + ATP. The protein operates within amino-acid biosynthesis; L-histidine biosynthesis; L-histidine from 5-phospho-alpha-D-ribose 1-diphosphate: step 1/9. Functionally, catalyzes the condensation of ATP and 5-phosphoribose 1-diphosphate to form N'-(5'-phosphoribosyl)-ATP (PR-ATP). Has a crucial role in the pathway because the rate of histidine biosynthesis seems to be controlled primarily by regulation of HisG enzymatic activity. This chain is ATP phosphoribosyltransferase, found in Campylobacter concisus (strain 13826).